A 549-amino-acid polypeptide reads, in one-letter code: Probable protein kinase UbiB (549 aa).

The 379-residue stretch at 123-501 folds into the Protein kinase domain; it reads DFDDIPLASA…QQKAHKSNYL (379 aa). ATP contacts are provided by residues 129 to 137 and Lys-152; that span reads LASASISQV. Residue Asp-287 is the Proton acceptor of the active site. Transmembrane regions (helical) follow at residues 498-518 and 520-540; these read SNYL…LINQ and ATLW…VLGW.

It belongs to the ABC1 family. UbiB subfamily.

The protein localises to the cell inner membrane. The protein operates within cofactor biosynthesis; ubiquinone biosynthesis [regulation]. Is probably a protein kinase regulator of UbiI activity which is involved in aerobic coenzyme Q (ubiquinone) biosynthesis. The sequence is that of Probable protein kinase UbiB from Shewanella halifaxensis (strain HAW-EB4).